We begin with the raw amino-acid sequence, 185 residues long: Casparian strip membrane protein 1 (185 aa).

The Cytoplasmic segment spans residues 1 to 32 (MKAVSIEAGERSKAKRVHGVNRGISVFDLVLR). A helical transmembrane segment spans residues 33-53 (IVALVGTLASAVAMGTAGQAL). At 54–73 (SFSTQIVNFEAQYDDIDAFK) the chain is on the extracellular side. Residues 74–94 (FFVVSNSITCVYLALSIPISI) traverse the membrane as a helical segment. The Cytoplasmic segment spans residues 95 to 106 (FHIIRSRAGKSR). A helical membrane pass occupies residues 107–127 (VLLIVLDAIMLVFLTSGASAA). Topologically, residues 128-160 (AAIVYLAHNGNTSTNWFSICQQYTDFCQRSAGS) are extracellular. The N-linked (GlcNAc...) asparagine glycan is linked to Asn138. The helical transmembrane segment at 161–181 (LIGSFGAMALMVLLIILSSIA) threads the bilayer. Residues 182–185 (LSRR) are Cytoplasmic-facing.

It belongs to the Casparian strip membrane proteins (CASP) family. In terms of assembly, homodimer and heterodimers.

It localises to the cell membrane. Regulates membrane-cell wall junctions and localized cell wall deposition. Required for establishment of the Casparian strip membrane domain (CSD) and the subsequent formation of Casparian strips, a cell wall modification of the root endodermis that determines an apoplastic barrier between the intraorganismal apoplasm and the extraorganismal apoplasm and prevents lateral diffusion. In Solanum demissum (Wild potato), this protein is Casparian strip membrane protein 1.